Reading from the N-terminus, the 566-residue chain is ALBINO3-like protein 3, mitochondrial (566 aa).

A mitochondrion-targeting transit peptide spans 1-44 (MAFRRVLLSHLRRSHHTCSSLSPHHVSATTQPSIALALFQSRFF). The next 4 membrane-spanning stretches (helical) occupy residues 139–159 (WVVI…ILIL), 207–227 (LWVP…ITSI), 249–269 (LTEI…AGLH), and 301–321 (LLTC…LLYW). 4 TPR repeats span residues 386–419 (PKEL…DPEY), 420–453 (LQAM…LLDT), 465–498 (IVAS…KEPD), and 507–540 (LDAL…DPSF). A disordered region spans residues 547–566 (CEEDDTIPTSSSSNSTSKTS). Over residues 555-566 (TSSSSNSTSKTS) the composition is skewed to low complexity.

The protein belongs to the OXA1/ALB3/YidC (TC 2.A.9.2) family.

The protein localises to the mitochondrion inner membrane. Functionally, probably required for the insertion of integral membrane proteins into the mitochondrial inner membrane. The protein is ALBINO3-like protein 3, mitochondrial (ALB3L3) of Arabidopsis thaliana (Mouse-ear cress).